Here is a 258-residue protein sequence, read N- to C-terminus: Hydroxyacylglutathione hydrolase (258 aa).

Zn(2+) is bound by residues His55, His57, Asp59, His60, His115, Asp132, and His170.

The protein belongs to the metallo-beta-lactamase superfamily. Glyoxalase II family. Monomer. Requires Zn(2+) as cofactor.

The catalysed reaction is an S-(2-hydroxyacyl)glutathione + H2O = a 2-hydroxy carboxylate + glutathione + H(+). The protein operates within secondary metabolite metabolism; methylglyoxal degradation; (R)-lactate from methylglyoxal: step 2/2. Functionally, thiolesterase that catalyzes the hydrolysis of S-D-lactoyl-glutathione to form glutathione and D-lactic acid. The chain is Hydroxyacylglutathione hydrolase from Shewanella halifaxensis (strain HAW-EB4).